The sequence spans 174 residues: Crossover junction endodeoxyribonuclease RuvC (174 aa).

Residues D8, E67, and D139 contribute to the active site. Positions 8, 67, and 139 each coordinate Mg(2+).

It belongs to the RuvC family. In terms of assembly, homodimer which binds Holliday junction (HJ) DNA. The HJ becomes 2-fold symmetrical on binding to RuvC with unstacked arms; it has a different conformation from HJ DNA in complex with RuvA. In the full resolvosome a probable DNA-RuvA(4)-RuvB(12)-RuvC(2) complex forms which resolves the HJ. Mg(2+) serves as cofactor.

It is found in the cytoplasm. The catalysed reaction is Endonucleolytic cleavage at a junction such as a reciprocal single-stranded crossover between two homologous DNA duplexes (Holliday junction).. The RuvA-RuvB-RuvC complex processes Holliday junction (HJ) DNA during genetic recombination and DNA repair. Endonuclease that resolves HJ intermediates. Cleaves cruciform DNA by making single-stranded nicks across the HJ at symmetrical positions within the homologous arms, yielding a 5'-phosphate and a 3'-hydroxyl group; requires a central core of homology in the junction. The consensus cleavage sequence is 5'-(A/T)TT(C/G)-3'. Cleavage occurs on the 3'-side of the TT dinucleotide at the point of strand exchange. HJ branch migration catalyzed by RuvA-RuvB allows RuvC to scan DNA until it finds its consensus sequence, where it cleaves and resolves the cruciform DNA. This is Crossover junction endodeoxyribonuclease RuvC from Pseudomonas putida (strain ATCC 47054 / DSM 6125 / CFBP 8728 / NCIMB 11950 / KT2440).